Here is a 477-residue protein sequence, read N- to C-terminus: Glutamate--tRNA ligase (477 aa).

The short motif at 12-22 (PSPTGMFHVGG) is the 'HIGH' region element. The Zn(2+) site is built by Cys-106, Cys-108, Cys-128, and Asp-130. A 'KMSKS' region motif is present at residues 238–242 (KLSKR). Residue Lys-241 coordinates ATP.

This sequence belongs to the class-I aminoacyl-tRNA synthetase family. Glutamate--tRNA ligase type 1 subfamily. Monomer. Requires Zn(2+) as cofactor.

It is found in the cytoplasm. The catalysed reaction is tRNA(Glu) + L-glutamate + ATP = L-glutamyl-tRNA(Glu) + AMP + diphosphate. Its function is as follows. Catalyzes the attachment of glutamate to tRNA(Glu) in a two-step reaction: glutamate is first activated by ATP to form Glu-AMP and then transferred to the acceptor end of tRNA(Glu). In Thermobifida fusca (strain YX), this protein is Glutamate--tRNA ligase.